Reading from the N-terminus, the 457-residue chain is Adenylosuccinate synthetase isozyme 1 (457 aa).

A disordered region spans residues 1–21; sequence MSGTRASNDRPPGAGGVKRGR. GTP is bound by residues 42 to 48 and 70 to 72; these read GDEGKGK and GHT. The active-site Proton acceptor is Asp43. Mg(2+) is bound by residues Asp43 and Gly70. Position 43 (Asp43) interacts with substrate. Residues 43-46, 68-71, Thr163, Arg177, Asn256, Thr271, and Arg335 each bind IMP; these read DEGK and NAGH. His71 acts as the Proton donor in catalysis. 331 to 337 contacts substrate; it reads VTTGRKR. Residues Arg337, 363-365, and 445-448 contribute to the GTP site; these read KLD and GVGK.

This sequence belongs to the adenylosuccinate synthetase family. In terms of assembly, homodimer. It depends on Mg(2+) as a cofactor. In terms of tissue distribution, predominantly expressed in skeletal muscle and heart, as well as in several hematopoietic cell lines and solid tumors.

The protein resides in the cytoplasm. The catalysed reaction is IMP + L-aspartate + GTP = N(6)-(1,2-dicarboxyethyl)-AMP + GDP + phosphate + 2 H(+). It functions in the pathway purine metabolism; AMP biosynthesis via de novo pathway; AMP from IMP: step 1/2. Component of the purine nucleotide cycle (PNC), which interconverts IMP and AMP to regulate the nucleotide levels in various tissues, and which contributes to glycolysis and ammoniagenesis. Catalyzes the first committed step in the biosynthesis of AMP from IMP. The sequence is that of Adenylosuccinate synthetase isozyme 1 from Homo sapiens (Human).